We begin with the raw amino-acid sequence, 253 residues long: Phycoerythrobilin:ferredoxin oxidoreductase (253 aa).

Belongs to the HY2 family.

The enzyme catalyses (3Z)-phycoerythrobilin + oxidized 2[4Fe-4S]-[ferredoxin] = 15,16-dihydrobiliverdin + reduced 2[4Fe-4S]-[ferredoxin] + 2 H(+). In terms of biological role, catalyzes the two-electron reduction of the C2 and C3(1) diene system of 15,16-dihydrobiliverdin. In Prochlorococcus marinus (strain MIT 9215), this protein is Phycoerythrobilin:ferredoxin oxidoreductase (pebB).